The primary structure comprises 224 residues: Cytidylate kinase (224 aa).

11–19 serves as a coordination point for ATP; the sequence is GPAGAGKST.

Belongs to the cytidylate kinase family. Type 1 subfamily.

The protein localises to the cytoplasm. It carries out the reaction CMP + ATP = CDP + ADP. It catalyses the reaction dCMP + ATP = dCDP + ADP. The chain is Cytidylate kinase from Lysinibacillus sphaericus (strain C3-41).